The primary structure comprises 404 residues: Rhomboid-related protein 3 (404 aa).

EF-hand domains are found at residues 34–69 (APED…HSSK) and 70–105 (LDPH…KRSN). Transmembrane regions (helical) follow at residues 164 to 184 (WFMI…GVLL), 227 to 247 (LGLN…VHGA), 250 to 270 (IGLV…VADM), 274 to 294 (VVGS…NIVM), 305 to 324 (LLRM…RAVW), 338 to 358 (PSFV…VVVL), and 371 to 391 (WWIF…WNIF). S278 functions as the Nucleophile in the catalytic mechanism. Residue H343 is part of the active site.

It belongs to the peptidase S54 family.

It is found in the membrane. It catalyses the reaction Cleaves type-1 transmembrane domains using a catalytic dyad composed of serine and histidine that are contributed by different transmembrane domains.. May be involved in regulated intramembrane proteolysis and the subsequent release of functional polypeptides from their membrane anchors. The polypeptide is Rhomboid-related protein 3 (Rhbdl3) (Mus musculus (Mouse)).